A 384-amino-acid polypeptide reads, in one-letter code: Lipoyl synthase 2, chloroplastic (384 aa).

The N-terminal 48 residues, 1 to 48 (MAAYCSRVYHHHPVSPSTMQGSLARPSIHAGSASLTFRARPNSVSIVR), are a transit peptide targeting the chloroplast. 7 residues coordinate [4Fe-4S] cluster: C108, C113, C119, C145, C149, C152, and S360. The region spanning 128–349 (GDGDGIATAT…KEYGESLGFL (222 aa)) is the Radical SAM core domain.

It belongs to the radical SAM superfamily. Lipoyl synthase family. Requires [4Fe-4S] cluster as cofactor.

It is found in the plastid. It localises to the chloroplast. It catalyses the reaction [[Fe-S] cluster scaffold protein carrying a second [4Fe-4S](2+) cluster] + N(6)-octanoyl-L-lysyl-[protein] + 2 oxidized [2Fe-2S]-[ferredoxin] + 2 S-adenosyl-L-methionine + 4 H(+) = [[Fe-S] cluster scaffold protein] + N(6)-[(R)-dihydrolipoyl]-L-lysyl-[protein] + 4 Fe(3+) + 2 hydrogen sulfide + 2 5'-deoxyadenosine + 2 L-methionine + 2 reduced [2Fe-2S]-[ferredoxin]. Its pathway is protein modification; protein lipoylation via endogenous pathway; protein N(6)-(lipoyl)lysine from octanoyl-[acyl-carrier-protein]: step 2/2. Its function is as follows. Catalyzes the radical-mediated insertion of two sulfur atoms into the C-6 and C-8 positions of the octanoyl moiety bound to the lipoyl domains of lipoate-dependent enzymes, thereby converting the octanoylated domains into lipoylated derivatives. In Oryza sativa subsp. indica (Rice), this protein is Lipoyl synthase 2, chloroplastic.